The primary structure comprises 129 residues: Small ribosomal subunit protein uS11 (129 aa).

The protein belongs to the universal ribosomal protein uS11 family. In terms of assembly, part of the 30S ribosomal subunit. Interacts with proteins S7 and S18. Binds to IF-3.

In terms of biological role, located on the platform of the 30S subunit, it bridges several disparate RNA helices of the 16S rRNA. Forms part of the Shine-Dalgarno cleft in the 70S ribosome. The protein is Small ribosomal subunit protein uS11 of Agrobacterium fabrum (strain C58 / ATCC 33970) (Agrobacterium tumefaciens (strain C58)).